The chain runs to 36 residues: uncharacterized protein (36 aa).

This is an uncharacterized protein from Archaeoglobus fulgidus (strain ATCC 49558 / DSM 4304 / JCM 9628 / NBRC 100126 / VC-16).